We begin with the raw amino-acid sequence, 454 residues long: Bifunctional protein GlmU (454 aa).

Residues 1–225 (MNIVILAAGM…IWETLGVNSK (225 aa)) form a pyrophosphorylase region. Residues 6 to 9 (LAAG), Lys20, Gln71, 76 to 77 (GT), 98 to 100 (YGD), Gly135, Glu150, Asn165, and Asn223 each bind UDP-N-acetyl-alpha-D-glucosamine. Asp100 lines the Mg(2+) pocket. Asn223 provides a ligand contact to Mg(2+). Residues 226–246 (LQLAEVERIHQGNQARRLLEA) form a linker region. Residues 247–454 (GVTLLDPARI…WQRPVKQPKK (208 aa)) are N-acetyltransferase. Residues Arg329 and Lys347 each contribute to the UDP-N-acetyl-alpha-D-glucosamine site. Residue His359 is the Proton acceptor of the active site. The UDP-N-acetyl-alpha-D-glucosamine site is built by Tyr362 and Asn373. Acetyl-CoA contacts are provided by residues Ala376, 382-383 (NY), Ser401, Ala419, and Arg436.

It in the N-terminal section; belongs to the N-acetylglucosamine-1-phosphate uridyltransferase family. In the C-terminal section; belongs to the transferase hexapeptide repeat family. In terms of assembly, homotrimer. Requires Mg(2+) as cofactor.

The protein localises to the cytoplasm. The enzyme catalyses alpha-D-glucosamine 1-phosphate + acetyl-CoA = N-acetyl-alpha-D-glucosamine 1-phosphate + CoA + H(+). It carries out the reaction N-acetyl-alpha-D-glucosamine 1-phosphate + UTP + H(+) = UDP-N-acetyl-alpha-D-glucosamine + diphosphate. Its pathway is nucleotide-sugar biosynthesis; UDP-N-acetyl-alpha-D-glucosamine biosynthesis; N-acetyl-alpha-D-glucosamine 1-phosphate from alpha-D-glucosamine 6-phosphate (route II): step 2/2. The protein operates within nucleotide-sugar biosynthesis; UDP-N-acetyl-alpha-D-glucosamine biosynthesis; UDP-N-acetyl-alpha-D-glucosamine from N-acetyl-alpha-D-glucosamine 1-phosphate: step 1/1. It functions in the pathway bacterial outer membrane biogenesis; LPS lipid A biosynthesis. In terms of biological role, catalyzes the last two sequential reactions in the de novo biosynthetic pathway for UDP-N-acetylglucosamine (UDP-GlcNAc). The C-terminal domain catalyzes the transfer of acetyl group from acetyl coenzyme A to glucosamine-1-phosphate (GlcN-1-P) to produce N-acetylglucosamine-1-phosphate (GlcNAc-1-P), which is converted into UDP-GlcNAc by the transfer of uridine 5-monophosphate (from uridine 5-triphosphate), a reaction catalyzed by the N-terminal domain. This is Bifunctional protein GlmU from Cupriavidus necator (strain ATCC 17699 / DSM 428 / KCTC 22496 / NCIMB 10442 / H16 / Stanier 337) (Ralstonia eutropha).